We begin with the raw amino-acid sequence, 385 residues long: DNA double-strand break repair protein Mre11 (385 aa).

Asp-14, His-16, and Asp-58 together coordinate Mn(2+). The Proton donor role is filled by His-94. Residues His-180, His-216, and His-218 each contribute to the Mn(2+) site.

This sequence belongs to the MRE11/RAD32 family. As to quaternary structure, homodimer. Forms a heterotetramer composed of two Mre11 subunits and two Rad50 subunits. Homodimerization facilitates DNA binding. Mn(2+) serves as cofactor.

Nuclease activity is regulated by Rad50. The mirin-derivative PFM39, specifically inhibits the 3'-5' exonuclease activity. The N-alkylated mirin-derivatives PFM03 and PFM01 specifically inhibit the endonuclease activity. Part of the Rad50/Mre11 complex, which is involved in the early steps of DNA double-strand break (DSB) repair. The complex may facilitate opening of the processed DNA ends to aid in the recruitment of HerA and NurA. Mre11 binds to DSB ends and has both double-stranded 3'-5' exonuclease activity and single-stranded endonuclease activity. This chain is DNA double-strand break repair protein Mre11, found in Thermotoga maritima (strain ATCC 43589 / DSM 3109 / JCM 10099 / NBRC 100826 / MSB8).